The following is a 124-amino-acid chain: Histone H2B (124 aa).

Residues 1-33 (MPEPAKSAPKKGSKKAVTKTAGKGGKKRKRSRK) form a disordered region. N6-acetyllysine is present on residues Lys-6 and Lys-11. Residues 8 to 17 (APKKGSKKAV) show a composition bias toward basic residues. A Phosphoserine modification is found at Ser-13. Residues Lys-14 and Lys-19 each carry the N6-acetyllysine modification. An O-linked (GlcNAc) serine glycan is attached at Ser-111. Lys-119 is covalently cross-linked (Glycyl lysine isopeptide (Lys-Gly) (interchain with G-Cter in ubiquitin)).

The protein belongs to the histone H2B family. The nucleosome is a histone octamer containing two molecules each of H2A, H2B, H3 and H4 assembled in one H3-H4 heterotetramer and two H2A-H2B heterodimers. The octamer wraps approximately 147 bp of DNA. Monoubiquitination of Lys-119 by BRE1 gives a specific tag for epigenetic transcriptional activation and is also prerequisite for histone H3 'Lys-4' and 'Lys-79' methylation. Post-translationally, phosphorylated during apoptosis; which facilitates apoptotic chromatin condensation. In terms of processing, glcNAcylation at Ser-111 promotes monoubiquitination of Lys-119. It fluctuates in response to extracellular glucose, and associates with transcribed genes.

It localises to the nucleus. It is found in the chromosome. Its function is as follows. Core component of nucleosome. Nucleosomes wrap and compact DNA into chromatin, limiting DNA accessibility to the cellular machineries which require DNA as a template. Histones thereby play a central role in transcription regulation, DNA repair, DNA replication and chromosomal stability. DNA accessibility is regulated via a complex set of post-translational modifications of histones, also called histone code, and nucleosome remodeling. This chain is Histone H2B, found in Oncorhynchus mykiss (Rainbow trout).